Here is a 248-residue protein sequence, read N- to C-terminus: 1-(5-phosphoribosyl)-5-[(5-phosphoribosylamino)methylideneamino] imidazole-4-carboxamide isomerase (248 aa).

The Proton acceptor role is filled by Asp-8. Asp-129 (proton donor) is an active-site residue.

Belongs to the HisA/HisF family.

Its subcellular location is the cytoplasm. It carries out the reaction 1-(5-phospho-beta-D-ribosyl)-5-[(5-phospho-beta-D-ribosylamino)methylideneamino]imidazole-4-carboxamide = 5-[(5-phospho-1-deoxy-D-ribulos-1-ylimino)methylamino]-1-(5-phospho-beta-D-ribosyl)imidazole-4-carboxamide. Its pathway is amino-acid biosynthesis; L-histidine biosynthesis; L-histidine from 5-phospho-alpha-D-ribose 1-diphosphate: step 4/9. The protein is 1-(5-phosphoribosyl)-5-[(5-phosphoribosylamino)methylideneamino] imidazole-4-carboxamide isomerase of Rhizobium johnstonii (strain DSM 114642 / LMG 32736 / 3841) (Rhizobium leguminosarum bv. viciae).